The following is a 149-amino-acid chain: UPF0178 protein Cphy_3042 (149 aa).

Basic residues predominate over residues 112-128 (QRRHGKQNLHSKNNKKR). Residues 112–132 (QRRHGKQNLHSKNNKKRTTGD) are disordered.

It belongs to the UPF0178 family.

The polypeptide is UPF0178 protein Cphy_3042 (Lachnoclostridium phytofermentans (strain ATCC 700394 / DSM 18823 / ISDg) (Clostridium phytofermentans)).